A 278-amino-acid polypeptide reads, in one-letter code: UPF0761 membrane protein NT05HA_1801 (278 aa).

6 consecutive transmembrane segments (helical) span residues 32–52, 88–108, 123–143, 168–188, 203–223, and 232–252; these read MLAI…FPVF, QMSA…INSI, PIFT…LLVG, LLSF…YMVV, LIAA…IVTF, and AMAT…FVLL.

Belongs to the UPF0761 family.

It is found in the cell inner membrane. In Aggregatibacter aphrophilus (strain NJ8700) (Haemophilus aphrophilus), this protein is UPF0761 membrane protein NT05HA_1801.